The chain runs to 196 residues: Protein hunchback (196 aa).

Disordered stretches follow at residues 16–60 (SHHH…NTNL) and 90–196 (AMTP…KYMA). A compositionally biased stretch (basic residues) spans 17–30 (HHHHHHHAHHSYHQ). A compositionally biased stretch (polar residues) spans 92–103 (TPSSSNNDQNSP). The segment covering 125 to 144 (PTATTTTTPAAAAPTTTAAT) has biased composition (low complexity). The span at 176–196 (AEREKEHDLMSNSSEDMKYMA) shows a compositional bias: basic and acidic residues.

This sequence belongs to the hunchback C2H2-type zinc-finger protein family.

It is found in the nucleus. Gap class segmentation protein that controls development of head structures. The polypeptide is Protein hunchback (hb) (Drosophila silvestris (Fruit fly)).